A 144-amino-acid polypeptide reads, in one-letter code: Large ribosomal subunit protein uL13 (144 aa).

This sequence belongs to the universal ribosomal protein uL13 family. As to quaternary structure, part of the 50S ribosomal subunit.

Functionally, this protein is one of the early assembly proteins of the 50S ribosomal subunit, although it is not seen to bind rRNA by itself. It is important during the early stages of 50S assembly. This is Large ribosomal subunit protein uL13 from Pelotomaculum thermopropionicum (strain DSM 13744 / JCM 10971 / SI).